We begin with the raw amino-acid sequence, 272 residues long: Orotidine 5'-phosphate decarboxylase (272 aa).

The active-site Proton donor is Lys-92.

The protein belongs to the OMP decarboxylase family. Type 2 subfamily.

The enzyme catalyses orotidine 5'-phosphate + H(+) = UMP + CO2. Its pathway is pyrimidine metabolism; UMP biosynthesis via de novo pathway; UMP from orotate: step 2/2. This Deinococcus radiodurans (strain ATCC 13939 / DSM 20539 / JCM 16871 / CCUG 27074 / LMG 4051 / NBRC 15346 / NCIMB 9279 / VKM B-1422 / R1) protein is Orotidine 5'-phosphate decarboxylase (pyrF).